The chain runs to 373 residues: Dual-specificity RNA methyltransferase RlmN (373 aa).

Residue Glu94 is the Proton acceptor of the active site. Residues 100 to 339 (DGDRATLCVS…VTVRKTRGDD (240 aa)) enclose the Radical SAM core domain. A disulfide bridge links Cys107 with Cys344. Residues Cys114, Cys118, and Cys121 each contribute to the [4Fe-4S] cluster site. Residues 168 to 169 (GE), Ser200, 222 to 224 (SLH), and Asn301 each bind S-adenosyl-L-methionine. Cys344 serves as the catalytic S-methylcysteine intermediate.

This sequence belongs to the radical SAM superfamily. RlmN family. [4Fe-4S] cluster serves as cofactor.

It is found in the cytoplasm. It carries out the reaction adenosine(2503) in 23S rRNA + 2 reduced [2Fe-2S]-[ferredoxin] + 2 S-adenosyl-L-methionine = 2-methyladenosine(2503) in 23S rRNA + 5'-deoxyadenosine + L-methionine + 2 oxidized [2Fe-2S]-[ferredoxin] + S-adenosyl-L-homocysteine. It catalyses the reaction adenosine(37) in tRNA + 2 reduced [2Fe-2S]-[ferredoxin] + 2 S-adenosyl-L-methionine = 2-methyladenosine(37) in tRNA + 5'-deoxyadenosine + L-methionine + 2 oxidized [2Fe-2S]-[ferredoxin] + S-adenosyl-L-homocysteine. Functionally, specifically methylates position 2 of adenine 2503 in 23S rRNA and position 2 of adenine 37 in tRNAs. m2A2503 modification seems to play a crucial role in the proofreading step occurring at the peptidyl transferase center and thus would serve to optimize ribosomal fidelity. The polypeptide is Dual-specificity RNA methyltransferase RlmN (Photobacterium profundum (strain SS9)).